The primary structure comprises 710 residues: Choline transporter-like protein 4 (710 aa).

Residues 1-34 lie on the Cytoplasmic side of the membrane; it reads MGGKQRDEDDEAYGKPVKYDPSFRGPIKNRSCTD. A helical membrane pass occupies residues 35–55; it reads VICCVLFLLFILGYIVVGIVA. Residues 56–229 are Extracellular-facing; that stretch reads WLYGDPRQVL…KIFEDFAQSW (174 aa). N-linked (GlcNAc...) asparagine glycans are attached at residues Asn69, Asn155, and Asn197. The chain crosses the membrane as a helical span at residues 230-250; it reads YWILVALGVALVLSLLFILLL. Over 251–252 the chain is Cytoplasmic; sequence RL. Residues 253 to 273 traverse the membrane as a helical segment; the sequence is VAGPLVLVLILGVLGVLAYGI. The Extracellular segment spans residues 274-309; sequence YYCWEEYRVLRDKGASISQLGFTTNLSAYQSVQETW. N-linked (GlcNAc...) asparagine glycosylation is present at Asn298. The helical transmembrane segment at 310 to 330 threads the bilayer; the sequence is LAALIVLAVLEAILLLMLIFL. Over 331–358 the chain is Cytoplasmic; that stretch reads RQRIRIAIALLKEASKAVGQMMSTMFYP. Residues 359-379 form a helical membrane-spanning segment; sequence LVTFVLLLICIAYWAMTALYL. Topologically, residues 380–455 are extracellular; the sequence is ATSGQPQYVL…GVLGLFWTLN (76 aa). 3 N-linked (GlcNAc...) asparagine glycosylation sites follow: Asn393, Asn405, and Asn416. Residues 456 to 476 form a helical membrane-spanning segment; it reads WVLALGQCVLAGAFASFYWAF. Over 477–501 the chain is Cytoplasmic; the sequence is HKPQDIPTFPLISAFIRTLRYHTGS. The helical transmembrane segment at 502–522 threads the bilayer; sequence LAFGALILTLVQIARVILEYI. Topologically, residues 523–560 are extracellular; that stretch reads DHKLRGVQNPVARCIMCCFKCCLWCLEKFIKFLNRNAY. A helical membrane pass occupies residues 561 to 581; it reads IMIAIYGKNFCVSAKNAFMLL. Topologically, residues 582–597 are cytoplasmic; it reads MRNIVRVVVLDKVTDL. A helical transmembrane segment spans residues 598–618; it reads LLFFGKLLVVGGVGVLSFFFF. At 619–638 the chain is on the extracellular side; that stretch reads SGRIPGLGKDFKSPHLNYYW. A helical transmembrane segment spans residues 639–659; it reads LPIMTSILGAYVIASGFFSVF. Residues 660-710 are Cytoplasmic-facing; sequence GMCVDTLFLCFLEDLERNNGSLDRPYYMSKSLLKILGKKNEAPPDNKKRKK.

Belongs to the CTL (choline transporter-like) family. Post-translationally, N-glycosylated; N-glycosylation of Asn-69, Asn-155 and Asn-393 is required for a proper thiamine pyrophosphate uptake. In terms of tissue distribution, highly expressed in colon, also detected in prostate, trachea and lung. Isoform 3 is also expressed in colon but a lower levels. As to expression, expressed in colon at low levels.

Its subcellular location is the membrane. The protein localises to the apical cell membrane. It carries out the reaction choline(out) + n H(+)(in) = choline(in) + n H(+)(out). It catalyses the reaction thiamine diphosphate(out) = thiamine diphosphate(in). Functionally, choline transporter that plays a role in the choline-acetylcholine system and is required to the efferent innervation of hair cells in the olivocochlear bundle for the maintenance of physiological function of outer hair cells and the protection of hair cells from acoustic injury. Also described as a thiamine pyrophosphate transporter in colon, may mediate the absorption of microbiota-generated thiamine pyrophosphate and contribute to host thiamine (vitamin B1) homeostasis. Also has thiamine pyrophosphate transporter activity. The chain is Choline transporter-like protein 4 from Homo sapiens (Human).